The chain runs to 280 residues: Clathrin adapter accessory protein LAA2 (280 aa).

Residues 1–26 (MSDRDQIEPVTNALDAESDSSDDFGN) are disordered. The Ear-binding motif motif lies at 19–30 (DSSDDFGNFSDA).

In terms of assembly, interacts with the clathrin-associated adapter complex AP-1. Interacts with LAA1.

Its subcellular location is the cytoplasmic vesicle. The protein resides in the clathrin-coated vesicle. Its function is as follows. Involved in localization of clathrin-associated adapter complex (AP-1) and subsequent AP-1-mediated clathrin-coated vesicle cargo loading. Directly mediates the interaction between LAA1 and AP-1 which is required for AP-1 localization. In complex with LAA1, cooperates with the small GTPase ARF1 and the phosphatidyl-inositol-4-phosphate (PI4P) synthesis to confer temporal specificity to AP-1 recruitment. The sequence is that of Clathrin adapter accessory protein LAA2 from Saccharomyces cerevisiae (strain ATCC 204508 / S288c) (Baker's yeast).